Reading from the N-terminus, the 139-residue chain is Nucleoside diphosphate kinase (139 aa).

K10, F58, R86, T92, R104, and N114 together coordinate ATP. H117 (pros-phosphohistidine intermediate) is an active-site residue.

This sequence belongs to the NDK family. Homotetramer. Requires Mg(2+) as cofactor.

The protein resides in the cytoplasm. The catalysed reaction is a 2'-deoxyribonucleoside 5'-diphosphate + ATP = a 2'-deoxyribonucleoside 5'-triphosphate + ADP. It catalyses the reaction a ribonucleoside 5'-diphosphate + ATP = a ribonucleoside 5'-triphosphate + ADP. Its function is as follows. Major role in the synthesis of nucleoside triphosphates other than ATP. The ATP gamma phosphate is transferred to the NDP beta phosphate via a ping-pong mechanism, using a phosphorylated active-site intermediate. The protein is Nucleoside diphosphate kinase of Rhodococcus opacus (strain B4).